Here is a 414-residue protein sequence, read N- to C-terminus: Multifunctional CCA protein (414 aa).

ATP-binding residues include glycine 8 and arginine 11. 2 residues coordinate CTP: glycine 8 and arginine 11. Mg(2+) contacts are provided by glutamate 21 and aspartate 23. Residues arginine 91, arginine 137, and arginine 140 each contribute to the ATP site. CTP is bound by residues arginine 91, arginine 137, and arginine 140. The region spanning 228 to 329 is the HD domain; the sequence is TGIHTMMTVA…LKLFDAIDVW (102 aa).

Belongs to the tRNA nucleotidyltransferase/poly(A) polymerase family. Bacterial CCA-adding enzyme type 1 subfamily. Monomer. Can also form homodimers and oligomers. Mg(2+) serves as cofactor. Ni(2+) is required as a cofactor.

The catalysed reaction is a tRNA precursor + 2 CTP + ATP = a tRNA with a 3' CCA end + 3 diphosphate. The enzyme catalyses a tRNA with a 3' CCA end + 2 CTP + ATP = a tRNA with a 3' CCACCA end + 3 diphosphate. In terms of biological role, catalyzes the addition and repair of the essential 3'-terminal CCA sequence in tRNAs without using a nucleic acid template. Adds these three nucleotides in the order of C, C, and A to the tRNA nucleotide-73, using CTP and ATP as substrates and producing inorganic pyrophosphate. tRNA 3'-terminal CCA addition is required both for tRNA processing and repair. Also involved in tRNA surveillance by mediating tandem CCA addition to generate a CCACCA at the 3' terminus of unstable tRNAs. While stable tRNAs receive only 3'-terminal CCA, unstable tRNAs are marked with CCACCA and rapidly degraded. The polypeptide is Multifunctional CCA protein (Pectobacterium carotovorum subsp. carotovorum (strain PC1)).